Here is a 1081-residue protein sequence, read N- to C-terminus: FHIP family protein GA25918 (1081 aa).

Residues 1 to 11 (MSWLRSSPLRQ) show a composition bias toward polar residues. Disordered stretches follow at residues 1 to 31 (MSWL…GSLR), 504 to 524 (ARPK…EQPI), 650 to 685 (ADEE…MGGG), 830 to 913 (NENS…AASS), and 933 to 1027 (NNNN…SEPA). Serine 508 is subject to Phosphoserine. A compositionally biased stretch (low complexity) spans 657-668 (TDLTVTTTTASE). Serine 833 carries the post-translational modification Phosphoserine. Low complexity predominate over residues 840 to 856 (QPQTTLSQQQQQQQGQQ). Over residues 857-876 (RSAYATLSAATPVQATQTSA) the composition is skewed to polar residues. 2 stretches are compositionally biased toward low complexity: residues 891–913 (SKSI…AASS) and 933–953 (NNNN…GTGT). Residues 954 to 963 (CETSLSTNPQ) show a composition bias toward polar residues. Low complexity predominate over residues 964–993 (SGAAAARSTGTATTANGNSSNSNISIGGST). Over residues 994–1010 (QTLSGHSNTTTYSSSTL) the composition is skewed to polar residues.

The protein belongs to the FHIP family.

The polypeptide is FHIP family protein GA25918 (Drosophila pseudoobscura pseudoobscura (Fruit fly)).